The primary structure comprises 277 residues: MKYFTIATVLTLASSALAAIRDVQLFAQSSNEEINNLGLISRREGAGVNYLFLASGAETLKFDDETFTIFSELQTGSTTARQSLVVSGGVVQLSVSGQPLHVEIAEDGSVKFAGSDSVAAAKNINDPYNYSKDSFAVVTNGGEGSIPFKIIAKFIGGGKSSSVTKHTEAPTTSPVYSNKTVTVFTTYCPESTTITLTICSEVCTPTVIETSGSVTVSSVLPSSSTEAPPKTSVAAPSTTAEAQTTAPVTSYEGGANEIVGGGSMAIALAAAAIGLVI.

The first 18 residues, 1–18, serve as a signal peptide directing secretion; it reads MKYFTIATVLTLASSALA. N-linked (GlcNAc...) asparagine glycosylation is found at N129 and N178. The tract at residues 219-246 is disordered; the sequence is VLPSSSTEAPPKTSVAAPSTTAEAQTTA. Over residues 234–246 the composition is skewed to polar residues; sequence AAPSTTAEAQTTA. G253 carries GPI-anchor amidated glycine lipidation. Positions 254–277 are cleaved as a propeptide — removed in mature form; it reads GANEIVGGGSMAIALAAAAIGLVI.

The protein belongs to the SRP1/TIP1 family. Post-translationally, the GPI-anchor is attached to the protein in the endoplasmic reticulum and serves to target the protein to the cell surface. There, the glucosamine-inositol phospholipid moiety is cleaved off and the GPI-modified mannoprotein is covalently attached via its lipidless GPI glycan remnant to the 1,6-beta-glucan of the outer cell wall layer.

Its subcellular location is the secreted. It is found in the cell wall. The protein resides in the membrane. Component of the cell wall involved in virulence which plays a role in the relationship between C.albicans and the host. The chain is Cell wall protein PGA30 (PGA30) from Candida albicans (strain SC5314 / ATCC MYA-2876) (Yeast).